A 175-amino-acid chain; its full sequence is ATP synthase subunit b (175 aa).

Residues 19–35 (GLIFWTTVTFLIVLFIL) form a helical membrane-spanning segment.

Belongs to the ATPase B chain family. F-type ATPases have 2 components, F(1) - the catalytic core - and F(0) - the membrane proton channel. F(1) has five subunits: alpha(3), beta(3), gamma(1), delta(1), epsilon(1). F(0) has four main subunits: a(1), b(2) and c(10-14). The alpha and beta chains form an alternating ring which encloses part of the gamma chain. F(1) is attached to F(0) by a central stalk formed by the gamma and epsilon chains, while a peripheral stalk is formed by the delta and b chains.

The protein localises to the cell inner membrane. F(1)F(0) ATP synthase produces ATP from ADP in the presence of a proton or sodium gradient. F-type ATPases consist of two structural domains, F(1) containing the extramembraneous catalytic core and F(0) containing the membrane proton channel, linked together by a central stalk and a peripheral stalk. During catalysis, ATP synthesis in the catalytic domain of F(1) is coupled via a rotary mechanism of the central stalk subunits to proton translocation. Its function is as follows. Component of the F(0) channel, it forms part of the peripheral stalk, linking F(1) to F(0). The chain is ATP synthase subunit b from Chlorobium phaeobacteroides (strain BS1).